We begin with the raw amino-acid sequence, 637 residues long: Chaperone protein HtpG (637 aa).

The a; substrate-binding stretch occupies residues 1–338; the sequence is MTSTIDKNGA…SADLPLNISR (338 aa). A b region spans residues 339 to 552; the sequence is EMIQESPILA…ESGPDRQLEK (214 aa). The segment at 553 to 637 is c; that stretch reads ILLGVGQLAG…LRRSSAGGGD (85 aa).

The protein belongs to the heat shock protein 90 family. As to quaternary structure, homodimer.

Its subcellular location is the cytoplasm. Its function is as follows. Molecular chaperone. Has ATPase activity. This is Chaperone protein HtpG from Nitrobacter winogradskyi (strain ATCC 25391 / DSM 10237 / CIP 104748 / NCIMB 11846 / Nb-255).